A 70-amino-acid polypeptide reads, in one-letter code: uncharacterized protein (70 aa).

This is an uncharacterized protein from Rickettsia conorii (strain ATCC VR-613 / Malish 7).